Consider the following 163-residue polypeptide: MTKVLLGFMGVGKTTVSKHLSMHCKDMDAIIEAKIGMSIAAFFEQHGEIAFRTIESQVLKDLLFTNDNSVIVTGGGVVVLQENRQLLRKNHQHNILLVASFETLYQRLKHDKKSQRPLFLKYSKEAFYEFYQQRMVFYEGLSDLVIRVDHRTPEEVANIIEGY.

Position 10 to 15 (10 to 15 (GVGKTT)) interacts with ATP. Thr-14 is a Mg(2+) binding site. Substrate contacts are provided by Asp-28, Arg-52, and Gly-75. Arg-116 is an ATP binding site. Arg-134 lines the substrate pocket. An ATP-binding site is contributed by Arg-151.

It belongs to the shikimate kinase family. Monomer. It depends on Mg(2+) as a cofactor.

The protein localises to the cytoplasm. It carries out the reaction shikimate + ATP = 3-phosphoshikimate + ADP + H(+). Its pathway is metabolic intermediate biosynthesis; chorismate biosynthesis; chorismate from D-erythrose 4-phosphate and phosphoenolpyruvate: step 5/7. Catalyzes the specific phosphorylation of the 3-hydroxyl group of shikimic acid using ATP as a cosubstrate. This chain is Shikimate kinase, found in Streptococcus pyogenes serotype M4 (strain MGAS10750).